The sequence spans 331 residues: Type 2 lactosamine alpha-2,3-sialyltransferase (331 aa).

Residues 1–4 (MRGY) lie on the Cytoplasmic side of the membrane. Residues 5-25 (LVAIFLSAVFLYYVLHCILWG) form a helical; Signal-anchor for type II membrane protein membrane-spanning segment. The Lumenal portion of the chain corresponds to 26–331 (TNVYWVAPVE…KNLVINLTQD (306 aa)). Residues asparagine 129, asparagine 181, asparagine 282, asparagine 295, asparagine 308, and asparagine 327 are each glycosylated (N-linked (GlcNAc...) asparagine).

The protein belongs to the glycosyltransferase 29 family. As to expression, ubiquitous.

It localises to the golgi apparatus membrane. The enzyme catalyses a neolactoside nLc4Cer(d18:1(4E)) + CMP-N-acetyl-beta-neuraminate = a neolactoside IV(3)-alpha-NeuAc-nLc4Cer(d18:1(4E)) + CMP + H(+). It carries out the reaction a beta-D-galactosyl-(1-&gt;4)-N-acetyl-beta-D-glucosaminyl derivative + CMP-N-acetyl-beta-neuraminate = an N-acetyl-alpha-neuraminyl-(2-&gt;3)-beta-D-galactosyl-(1-&gt;4)-N-acetyl-beta-D-glucosaminyl derivative + CMP + H(+). It catalyses the reaction a neolactoside nLc6Cer(d18:1(4E)) + CMP-N-acetyl-beta-neuraminate = a neolactoside VI(3)-alpha-NeuNAc-nLc6Cer(d18:1(4E)) + CMP + H(+). Transfers the sialyl residue from CMP-N-acetyl-beta-neuraminate to the terminal galactose residue on sugar chains of glycoproteins and glycolipids. It's alpha-2,3-sialyltransferase activity is specific toward type II glycan chains (Galbeta1-4GlcNAc) on glycoproteins and glycolipids such as neolactosides nLc4Cer and nLc6Cer, whose sialyl-products serve as precursors for the Lewis X antigen. Critically involved in the synthesis of functional selectin ligands needed for neutrophil recruitment during inflammation and lymphocyte homing to the lymph nodes. In Homo sapiens (Human), this protein is Type 2 lactosamine alpha-2,3-sialyltransferase (ST3GAL6).